We begin with the raw amino-acid sequence, 29 residues long: Cuticle protein 36 (29 aa).

Its function is as follows. Component of the cuticle of migratory locust which contains more than 100 different structural proteins. The polypeptide is Cuticle protein 36 (Locusta migratoria (Migratory locust)).